The chain runs to 143 residues: Insulin-like growth factor 1 (143 aa).

The N-terminal stretch at 1-32 is a signal peptide; the sequence is MITPTVKMRILSSSHLFYLALCLLTFTSSATA. The interval 33 to 61 is b; the sequence is GPETLCGAELVDALQFVCGDRGFYFNKPT. 3 disulfide bridges follow: cysteine 38-cysteine 80, cysteine 50-cysteine 93, and cysteine 79-cysteine 84. The segment at 62–73 is c; that stretch reads GYGSSSRRAPQT. Residues 74-94 are a; the sequence is GIVDECCFRSCDLRRLEMYCA. The interval 95-102 is d; that stretch reads PLKPAKAA. Positions 99-143 are disordered; the sequence is AKAARSVRAQRHTDMPKTQKYQPPSTNKKMKSQRRRKGSTFEEHK. Positions 103–143 are cleaved as a propeptide — e peptide; that stretch reads RSVRAQRHTDMPKTQKYQPPSTNKKMKSQRRRKGSTFEEHK. Residues 126 to 136 are compositionally biased toward basic residues; that stretch reads KKMKSQRRRKG.

This sequence belongs to the insulin family. Forms a ternary complex with IGFR1 and ITGAV:ITGB3. Forms a ternary complex with IGFR1 and ITGA6:ITGB4. Forms a ternary complex with IGFBP3 and ALS.

The protein resides in the secreted. In terms of biological role, the insulin-like growth factors, isolated from plasma, are structurally and functionally related to insulin but have a much higher growth-promoting activity. May be a physiological regulator of [1-14C]-2-deoxy-D-glucose (2DG) transport and glycogen synthesis in osteoblasts. Stimulates glucose transport in bone-derived osteoblastic (PyMS) cells and is effective at much lower concentrations than insulin, not only regarding glycogen and DNA synthesis but also with regard to enhancing glucose uptake. May play a role in synapse maturation. Ca(2+)-dependent exocytosis of IGF1 is required for sensory perception of smell in the olfactory bulb. Acts as a ligand for IGF1R. Binds to the alpha subunit of IGF1R, leading to the activation of the intrinsic tyrosine kinase activity which autophosphorylates tyrosine residues in the beta subunit thus initiating a cascade of down-stream signaling events leading to activation of the PI3K-AKT/PKB and the Ras-MAPK pathways. Binds to integrins ITGAV:ITGB3 and ITGA6:ITGB4. Its binding to integrins and subsequent ternary complex formation with integrins and IGFR1 are essential for IGF1 signaling. Induces the phosphorylation and activation of IGFR1, MAPK3/ERK1, MAPK1/ERK2 and AKT1. As part of the MAPK/ERK signaling pathway, acts as a negative regulator of apoptosis in cardiomyocytes via promotion of STUB1/CHIP-mediated ubiquitination and degradation of ICER-type isoforms of CREM. In Oryctolagus cuniculus (Rabbit), this protein is Insulin-like growth factor 1.